Here is a 329-residue protein sequence, read N- to C-terminus: Biotin synthase (329 aa).

Positions 38-262 constitute a Radical SAM core domain; it reads NTIQVSTLLS…IMPHSYIRLS (225 aa). [4Fe-4S] cluster contacts are provided by Cys-53, Cys-57, and Cys-60. Cys-97, Cys-128, Cys-188, and Arg-260 together coordinate [2Fe-2S] cluster.

Belongs to the radical SAM superfamily. Biotin synthase family. In terms of assembly, homodimer. Requires [4Fe-4S] cluster as cofactor. The cofactor is [2Fe-2S] cluster.

The enzyme catalyses (4R,5S)-dethiobiotin + (sulfur carrier)-SH + 2 reduced [2Fe-2S]-[ferredoxin] + 2 S-adenosyl-L-methionine = (sulfur carrier)-H + biotin + 2 5'-deoxyadenosine + 2 L-methionine + 2 oxidized [2Fe-2S]-[ferredoxin]. It participates in cofactor biosynthesis; biotin biosynthesis; biotin from 7,8-diaminononanoate: step 2/2. In terms of biological role, catalyzes the conversion of dethiobiotin (DTB) to biotin by the insertion of a sulfur atom into dethiobiotin via a radical-based mechanism. This chain is Biotin synthase, found in Acinetobacter calcoaceticus.